We begin with the raw amino-acid sequence, 179 residues long: Large ribosomal subunit protein uL10 (179 aa).

Belongs to the universal ribosomal protein uL10 family. In terms of assembly, part of the ribosomal stalk of the 50S ribosomal subunit. The N-terminus interacts with L11 and the large rRNA to form the base of the stalk. The C-terminus forms an elongated spine to which L12 dimers bind in a sequential fashion forming a multimeric L10(L12)X complex.

In terms of biological role, forms part of the ribosomal stalk, playing a central role in the interaction of the ribosome with GTP-bound translation factors. This is Large ribosomal subunit protein uL10 from Mycolicibacterium vanbaalenii (strain DSM 7251 / JCM 13017 / BCRC 16820 / KCTC 9966 / NRRL B-24157 / PYR-1) (Mycobacterium vanbaalenii).